Consider the following 436-residue polypeptide: UPF0597 protein YhaM (436 aa).

It belongs to the UPF0597 family.

This chain is UPF0597 protein YhaM, found in Escherichia coli (strain 55989 / EAEC).